A 237-amino-acid polypeptide reads, in one-letter code: Probable aquaporin SIP2-1 (237 aa).

Helical transmembrane passes span Phe15–Ser35, Pro39–Leu59, Leu71–Val91, Val122–Ser142, Ile169–Tyr189, and Val202–Phe222. Positions Asn69–Leu71 match the NPA 1 motif. The short motif at Asn180–Ala182 is the NPA 2 element.

It belongs to the MIP/aquaporin (TC 1.A.8) family. SIP (TC 1.A.8.10) subfamily. As to expression, expressed in dividing cells and elongating regions of the root tips, emerging lateral roots, root steles, cotyledons, main veins of the rosette leaves, vascular tissues of the flower petals, stigma, stamens (anthers and filaments), pollen and the top and bottom (receptacle) of siliques.

Its subcellular location is the endoplasmic reticulum membrane. Its function is as follows. Water channel required to facilitate the transport of water across cell membrane. Inactive in yeast cells. The polypeptide is Probable aquaporin SIP2-1 (SIP2-1) (Arabidopsis thaliana (Mouse-ear cress)).